The primary structure comprises 288 residues: Serine/threonine-protein kinase pef1 (288 aa).

Positions 3 to 285 (YQRLEKLGEG…GQDALQHAWF (283 aa)) constitute a Protein kinase domain. ATP is bound by residues 9-17 (LGEGTYAHV) and Lys32. Thr13 is subject to Phosphothreonine. A Phosphotyrosine modification is found at Tyr14. Asp126 (proton acceptor) is an active-site residue.

This sequence belongs to the protein kinase superfamily. CMGC Ser/Thr protein kinase family. CDC2/CDKX subfamily. Interacts with the pas1 cyclin.

The catalysed reaction is L-seryl-[protein] + ATP = O-phospho-L-seryl-[protein] + ADP + H(+). The enzyme catalyses L-threonyl-[protein] + ATP = O-phospho-L-threonyl-[protein] + ADP + H(+). In Schizosaccharomyces pombe (strain 972 / ATCC 24843) (Fission yeast), this protein is Serine/threonine-protein kinase pef1 (pef1).